We begin with the raw amino-acid sequence, 129 residues long: Small ribosomal subunit protein uS11 (129 aa).

Belongs to the universal ribosomal protein uS11 family. Part of the 30S ribosomal subunit. Interacts with proteins S7 and S18. Binds to IF-3.

Its function is as follows. Located on the platform of the 30S subunit, it bridges several disparate RNA helices of the 16S rRNA. Forms part of the Shine-Dalgarno cleft in the 70S ribosome. The polypeptide is Small ribosomal subunit protein uS11 (Methylobacterium radiotolerans (strain ATCC 27329 / DSM 1819 / JCM 2831 / NBRC 15690 / NCIMB 10815 / 0-1)).